Here is a 20-residue protein sequence, read N- to C-terminus: Small ribosomal subunit protein bS20 (20 aa).

The tract at residues 1 to 20 (ANNPGARKAIRKIEARTEVN) is disordered. Residues 11–20 (RKIEARTEVN) are compositionally biased toward basic and acidic residues.

Belongs to the bacterial ribosomal protein bS20 family.

Binds directly to 16S ribosomal RNA. The polypeptide is Small ribosomal subunit protein bS20 (rpsT) (Brevundimonas vesicularis (Pseudomonas vesicularis)).